A 363-amino-acid polypeptide reads, in one-letter code: Protein RecA (363 aa).

Residue 79–86 (GPESSGKT) coordinates ATP.

It belongs to the RecA family.

It localises to the cytoplasm. Functionally, can catalyze the hydrolysis of ATP in the presence of single-stranded DNA, the ATP-dependent uptake of single-stranded DNA by duplex DNA, and the ATP-dependent hybridization of homologous single-stranded DNAs. It interacts with LexA causing its activation and leading to its autocatalytic cleavage. In Borrelia duttonii (strain Ly), this protein is Protein RecA.